A 438-amino-acid chain; its full sequence is Coenzyme A disulfide reductase (438 aa).

8-33 is a binding site for FAD; it reads GAVAGGATCASQIRRLDKESDIIIFE. The substrate site is built by threonine 15, glutamine 19, arginine 22, serine 39, and asparagine 42. The active-site Nucleophile is the cysteine 43. The active-site Redox-active is the cysteine 43. Residue lysine 71 participates in substrate binding. NADP(+) is bound at residue 151–166; it reads VLVVGAGYVSLEVLEN. 267–277 is an FAD binding site; that stretch reads TNVPNIYAIGD. Residue histidine 299 coordinates substrate. Tyrosine 419 lines the FAD pocket. Lysine 427 is a binding site for substrate.

The protein belongs to the class-III pyridine nucleotide-disulfide oxidoreductase family. In terms of assembly, homodimer. Requires FAD as cofactor.

It carries out the reaction NADP(+) + 2 CoA = CoA-disulfide + NADPH + H(+). Functionally, catalyzes specifically the NADPH-dependent reduction of coenzyme A disulfide. This chain is Coenzyme A disulfide reductase, found in Staphylococcus aureus (strain COL).